The following is a 540-amino-acid chain: Solute carrier family 2, facilitated glucose transporter member 9 (540 aa).

The tract at residues 1–31 is disordered; that stretch reads MARKQNRNSKELGLVPLTDDTSHAGPPGPGR. Residues 1–51 are Cytoplasmic-facing; sequence MARKQNRNSKELGLVPLTDDTSHAGPPGPGRALLECDHLRSGVPGGRRRKD. Serine 9 bears the Phosphoserine mark. The chain crosses the membrane as a helical span at residues 52 to 72; it reads WSCSLLVASLAGAFGSSFLYG. Residues 73 to 107 lie on the Extracellular side of the membrane; that stretch reads YNLSVVNAPTPYIKAFYNESWERRHGRPIDPDTLT. A glycan (N-linked (GlcNAc...) asparagine) is linked at asparagine 90. A helical membrane pass occupies residues 108–128; it reads LLWSVTVSIFAIGGLVGTLIV. The Cytoplasmic segment spans residues 129–140; sequence KMIGKVLGRKHT. Residues 141-161 traverse the membrane as a helical segment; the sequence is LLANNGFAISAALLMACSLQA. Over 162 to 171 the chain is Extracellular; that stretch reads GAFEMLIVGR. Residues 172–192 traverse the membrane as a helical segment; that stretch reads FIMGIDGGVALSVLPMYLSEI. The Cytoplasmic portion of the chain corresponds to 193 to 200; the sequence is SPKEIRGS. The chain crosses the membrane as a helical span at residues 201–221; it reads LGQVTAIFICIGVFTGQLLGL. Over 222-231 the chain is Extracellular; the sequence is PELLGKESTW. The chain crosses the membrane as a helical span at residues 232–252; that stretch reads PYLFGVIVVPAVVQLLSLPFL. The Cytoplasmic segment spans residues 253–316; it reads PDSPRYLLLE…LLRAPYVRWQ (64 aa). Residues 317 to 337 traverse the membrane as a helical segment; the sequence is VVTVIVTMACYQLCGLNAIWF. The Extracellular segment spans residues 338-354; it reads YTNSIFGKAGIPPAKIP. A helical membrane pass occupies residues 355 to 375; sequence YVTLSTGGIETLAAVFSGLVI. At 376 to 381 the chain is on the cytoplasmic side; the sequence is EHLGRR. The helical transmembrane segment at 382–402 threads the bilayer; it reads PLLIGGFGLMGLFFGTLTITL. Topologically, residues 403-415 are extracellular; that stretch reads TLQDHAPWVPYLS. The chain crosses the membrane as a helical span at residues 416–436; it reads IVGILAIIASFCSGPGGIPFI. The Cytoplasmic segment spans residues 437 to 451; it reads LTGEFFQQSQRPAAF. Residues 452 to 472 form a helical membrane-spanning segment; it reads IIAGTVNWLSNFAVGLLFPFI. Over 473 to 478 the chain is Extracellular; that stretch reads QKSLDT. The helical transmembrane segment at 479–499 threads the bilayer; it reads YCFLVFATICITGAIYLYFVL. Topologically, residues 500–540 are cytoplasmic; it reads PETKNRTYAEISQAFSKRNKAYPPEEKIDSAVTDGKINGRP. Position 515 is a phosphoserine (serine 515). The disordered stretch occupies residues 519–540; that stretch reads KAYPPEEKIDSAVTDGKINGRP.

The protein belongs to the major facilitator superfamily. Sugar transporter (TC 2.A.1.1) family. Glucose transporter subfamily. As to expression, most strongly expressed in basolateral membranes of proximal renal tubular cells, liver and placenta. Also detected in lung, blood leukocytes, heart skeletal muscle and chondrocytes from articular cartilage. Detected in kidney membrane (at protein level). In terms of tissue distribution, only detected in the apical membranes of polarized renal tubular cells and placenta. Detected in kidney membrane (at protein level).

It is found in the cell membrane. The protein resides in the basolateral cell membrane. Its subcellular location is the apical cell membrane. The catalysed reaction is urate(out) = urate(in). With respect to regulation, extracellular glucose and urate accelerate urate efflux. Intracellular urate, glucose and fructose accelerate urate influx. Its activity is regulated as follows. No effect of extracellular urate, glucose or fructose on urate efflux. Intracellular urate and fructose slightly accelerate urate influx. High-capacity urate transporter, which may play a role in the urate reabsorption by proximal tubules. May have a residual high-affinity, low-capacity glucose and fructose transporter activity. Transports urate at rates 45- to 60-fold faster than glucose. Does not transport galactose. May mediate small uptake of adenine but not of other nucleobases. The protein is Solute carrier family 2, facilitated glucose transporter member 9 of Homo sapiens (Human).